The chain runs to 337 residues: SAGA complex subunit SPT3 (337 aa).

A disordered region spans residues 92 to 131 (KDQDASAGVASGTGNPGAGGEDDLKKAGGGEKDEKDGGNM). Basic and acidic residues predominate over residues 113-128 (DDLKKAGGGEKDEKDG). Position 270 is a phosphoserine (S270).

The protein belongs to the SPT3 family. Component of the 1.8 MDa SAGA (Spt-Ada-Gcn5 acetyltransferase) complex, which is composed of 19 subunits TRA1, SPT7, TAF5, NGG1/ADA3, SGF73, SPT20/ADA5, SPT8, TAF12, TAF6, HFI1/ADA1, UBP8, GCN5, ADA2, SPT3, SGF29, TAF10, TAF9, SGF11 and SUS1. The SAGA complex is composed of 4 modules, namely the HAT (histone acetyltransferase) module (GCN5, ADA2, NGG1/ADA3 and SGF29), the DUB (deubiquitinating) module (UBP8, SGF11, SGF73 and SUS1), the core or TAF (TBP-associated factor) module (TAF5, TAF6, TAF9, TAF10 and TAF12), and the Tra1 or SPT (Suppressor of Ty) module (TRA1, HFI1/ADA1, SPT3, SPT7, SPT8 and SPT20/ADA5). The Tra1/SPT module binds activators, the core module recruits TBP (TATA-binding protein), the HAT module contains the histone H3 acetyltransferase GCN5, and the DUB module comprises the histone H2B deubiquitinase UBP8. Also identified in an altered form of SAGA, named SALSA (SAGA altered, Spt8 absent) or SLIK (SAGA-like) complex, which contains a C-terminal truncated form of SPT7 and is missing SPT8. However, it has been shown that the SAGA and SAGA-like SALSA/SLIK transcriptional coactivators are structurally and biochemically equivalent.

Its subcellular location is the nucleus. It localises to the cytoplasm. Its function is as follows. Component of the transcription coactivator SAGA complex. SAGA acts as a general cofactor required for essentially all RNA polymerase II transcription. At the promoters, SAGA is required for transcription pre-initiation complex (PIC) recruitment. It influences RNA polymerase II transcriptional activity through different activities such as TBP interaction (via core/TAF module) and promoter selectivity, interaction with transcription activators (via Tra1/SPT module), and chromatin modification through histone acetylation (via HAT module) and deubiquitination (via DUB module). SAGA preferentially acetylates histones H3 (to form H3K9ac, H3K14ac, H3K18ac and H3K23ac) and H2B and deubiquitinates histone H2B. SAGA interacts with DNA via upstream activating sequences (UASs). Also identified in a modified version of SAGA named SALSA or SLIK. The cleavage of SPT7 and the absence of the SPT8 subunit in SLIK neither drive any major conformational differences in its structure compared with SAGA, nor significantly affect HAT, DUB, or DNA-binding activities. SPT3 is required for recruitment of TATA-binding protein (TBP) to SAGA-dependent promoters. During SAGA-mediated transcriptional inhibition, SPT3 and SPT8 prevent binding of TBP to the TATA box. Required for diploid filamentous growth and haploid invasive growth. This is SAGA complex subunit SPT3 (SPT3) from Saccharomyces cerevisiae (strain ATCC 204508 / S288c) (Baker's yeast).